The chain runs to 296 residues: Cyclin-dependent kinase 1 (296 aa).

One can recognise a Protein kinase domain in the interval 10-288 (YQKLEKLGEG…AKEALLHPYF (279 aa)). ATP-binding positions include 16-24 (LGEGTYGKV) and lysine 39. At threonine 20 the chain carries Phosphothreonine. Position 21 is a phosphotyrosine (tyrosine 21). Aspartate 129 functions as the Proton acceptor in the catalytic mechanism. Threonine 162 carries the post-translational modification Phosphothreonine; by CAK.

The protein belongs to the protein kinase superfamily. CMGC Ser/Thr protein kinase family. CDC2/CDKX subfamily. As to quaternary structure, forms a stable but non-covalent complex with a regulatory subunit and with a cyclin.

It catalyses the reaction L-seryl-[protein] + ATP = O-phospho-L-seryl-[protein] + ADP + H(+). It carries out the reaction L-threonyl-[protein] + ATP = O-phospho-L-threonyl-[protein] + ADP + H(+). The catalysed reaction is [DNA-directed RNA polymerase] + ATP = phospho-[DNA-directed RNA polymerase] + ADP + H(+). With respect to regulation, phosphorylation at Thr-20 or Tyr-21 inactivates the enzyme, while phosphorylation at Thr-162 activates it. Its function is as follows. Plays a key role in the control of the eukaryotic cell cycle. Required for entry into S-phase and mitosis. p34 is a component of the kinase complex that phosphorylates the repetitive C-terminus of RNA polymerase II. The chain is Cyclin-dependent kinase 1 (cdk1) from Dictyostelium discoideum (Social amoeba).